Here is a 335-residue protein sequence, read N- to C-terminus: MSSSTHTNFKQYLAAVKPQGEAAPAGLQELLIAVTQTCSTLSHEVAQGALIGLLGSAGTGNVQGEVQQKLDIIANDLLIEGVQGCKSLAGLASEEMELPVPVQGTGDYLLLFDPLDGSSNIDVNVSIGTIFSILKKQDPQAPLQTADFLLSGRHQVAAGYVVYGPQTTMALTLGDGVVMFTLNKVTGEFLLIKDAVTIAHSTKEFAINMSNMRHWADPVKRYVEECLAGVGGAREKDFNMRWIASMVADVHRVLSRGGVFMYPWDQREPHKPGKLRLMYEANPMSFLVEQAGGASTNGTQLIMDLQPTDLHERVSVMLGSKEEIDRLQHYHSSLA.

Residues E94, D113, L115, and D116 each contribute to the Mg(2+) site. Residues 116–119 (DGSS), N208, and K274 contribute to the substrate site. E280 contacts Mg(2+).

This sequence belongs to the FBPase class 1 family. Homotetramer. The cofactor is Mg(2+).

It localises to the cytoplasm. The enzyme catalyses beta-D-fructose 1,6-bisphosphate + H2O = beta-D-fructose 6-phosphate + phosphate. It participates in carbohydrate biosynthesis; gluconeogenesis. The sequence is that of Fructose-1,6-bisphosphatase class 1 from Polynucleobacter asymbioticus (strain DSM 18221 / CIP 109841 / QLW-P1DMWA-1) (Polynucleobacter necessarius subsp. asymbioticus).